The primary structure comprises 545 residues: Chaperonin GroEL (545 aa).

Residues 29-32, lysine 50, 86-90, glycine 414, 477-479, and aspartate 493 contribute to the ATP site; these read TMGP, DGTTT, and DAA.

This sequence belongs to the chaperonin (HSP60) family. Forms a cylinder of 14 subunits composed of two heptameric rings stacked back-to-back. Interacts with the co-chaperonin GroES.

It localises to the cytoplasm. It carries out the reaction ATP + H2O + a folded polypeptide = ADP + phosphate + an unfolded polypeptide.. Functionally, together with its co-chaperonin GroES, plays an essential role in assisting protein folding. The GroEL-GroES system forms a nano-cage that allows encapsulation of the non-native substrate proteins and provides a physical environment optimized to promote and accelerate protein folding. The protein is Chaperonin GroEL of Campylobacter jejuni subsp. jejuni serotype O:6 (strain 81116 / NCTC 11828).